The primary structure comprises 342 residues: Dihydroorotate dehydrogenase (quinone) (342 aa).

Residues 61–65 (AGLDK) and Thr-85 contribute to the FMN site. Position 65 (Lys-65) interacts with substrate. 110–114 (NRMGF) provides a ligand contact to substrate. FMN is bound by residues Asn-138 and Asn-171. Substrate is bound at residue Asn-171. Ser-174 (nucleophile) is an active-site residue. Position 176 (Asn-176) interacts with substrate. FMN is bound by residues Lys-216 and Thr-244. 245–246 (NT) is a binding site for substrate. FMN-binding positions include Gly-267, Gly-296, and 317-318 (YS).

It belongs to the dihydroorotate dehydrogenase family. Type 2 subfamily. As to quaternary structure, monomer. Requires FMN as cofactor.

The protein localises to the cell membrane. It carries out the reaction (S)-dihydroorotate + a quinone = orotate + a quinol. Its pathway is pyrimidine metabolism; UMP biosynthesis via de novo pathway; orotate from (S)-dihydroorotate (quinone route): step 1/1. In terms of biological role, catalyzes the conversion of dihydroorotate to orotate with quinone as electron acceptor. The polypeptide is Dihydroorotate dehydrogenase (quinone) (Cellvibrio japonicus (strain Ueda107) (Pseudomonas fluorescens subsp. cellulosa)).